The following is a 490-amino-acid chain: Bifunctional protein HldE (490 aa).

The interval 1–330 (MERKNVESLF…GSMGFQHSDS (330 aa)) is ribokinase. Residue 205–208 (NRKE) participates in ATP binding. Residue Asp-275 is part of the active site. The cytidylyltransferase stretch occupies residues 356-490 (FTNGCFDLLH…DKILRAYGEE (135 aa)).

It in the N-terminal section; belongs to the carbohydrate kinase PfkB family. The protein in the C-terminal section; belongs to the cytidylyltransferase family. In terms of assembly, homodimer.

It carries out the reaction D-glycero-beta-D-manno-heptose 7-phosphate + ATP = D-glycero-beta-D-manno-heptose 1,7-bisphosphate + ADP + H(+). The enzyme catalyses D-glycero-beta-D-manno-heptose 1-phosphate + ATP + H(+) = ADP-D-glycero-beta-D-manno-heptose + diphosphate. The protein operates within nucleotide-sugar biosynthesis; ADP-L-glycero-beta-D-manno-heptose biosynthesis; ADP-L-glycero-beta-D-manno-heptose from D-glycero-beta-D-manno-heptose 7-phosphate: step 1/4. It participates in nucleotide-sugar biosynthesis; ADP-L-glycero-beta-D-manno-heptose biosynthesis; ADP-L-glycero-beta-D-manno-heptose from D-glycero-beta-D-manno-heptose 7-phosphate: step 3/4. Catalyzes the phosphorylation of D-glycero-D-manno-heptose 7-phosphate at the C-1 position to selectively form D-glycero-beta-D-manno-heptose-1,7-bisphosphate. In terms of biological role, catalyzes the ADP transfer from ATP to D-glycero-beta-D-manno-heptose 1-phosphate, yielding ADP-D-glycero-beta-D-manno-heptose. This is Bifunctional protein HldE from Geobacter metallireducens (strain ATCC 53774 / DSM 7210 / GS-15).